Consider the following 305-residue polypeptide: Coiled-coil domain-containing protein 50 (305 aa).

Residue Ala-2 is modified to N-acetylalanine. Ser-5 bears the Phosphoserine mark. The stretch at 86–130 forms a coiled coil; it reads EIAQEIQEKLTIEAERRRIQEKKDEDIARLLQEKELQEEKRRKKH. Disordered regions lie at residues 122–142 and 218–305; these read QEEK…VFGD and KKAK…HNKQ. 2 stretches are compositionally biased toward basic and acidic residues: residues 218–239 and 247–263; these read KKAK…ECKL and KSKE…DRPS. Residues 279–305 show a composition bias toward polar residues; sequence THFTNQHSTTWHLPKSESSQKGFHNKQ.

Interacts with RNF126. Post-translationally, phosphorylated on tyrosine residues. Widely expressed.

It localises to the cytoplasm. Its function is as follows. Involved in EGFR signaling. The chain is Coiled-coil domain-containing protein 50 (Ccdc50) from Mus musculus (Mouse).